Here is a 223-residue protein sequence, read N- to C-terminus: Phosphoribosylformylglycinamidine synthase subunit PurQ (223 aa).

The Glutamine amidotransferase type-1 domain occupies 2 to 223 (KIAVVVFPGS…KSLLKAGVQA (222 aa)). C86 functions as the Nucleophile in the catalytic mechanism. Catalysis depends on residues H195 and E197.

In terms of assembly, part of the FGAM synthase complex composed of 1 PurL, 1 PurQ and 2 PurS subunits.

Its subcellular location is the cytoplasm. The catalysed reaction is N(2)-formyl-N(1)-(5-phospho-beta-D-ribosyl)glycinamide + L-glutamine + ATP + H2O = 2-formamido-N(1)-(5-O-phospho-beta-D-ribosyl)acetamidine + L-glutamate + ADP + phosphate + H(+). It carries out the reaction L-glutamine + H2O = L-glutamate + NH4(+). The protein operates within purine metabolism; IMP biosynthesis via de novo pathway; 5-amino-1-(5-phospho-D-ribosyl)imidazole from N(2)-formyl-N(1)-(5-phospho-D-ribosyl)glycinamide: step 1/2. Functionally, part of the phosphoribosylformylglycinamidine synthase complex involved in the purines biosynthetic pathway. Catalyzes the ATP-dependent conversion of formylglycinamide ribonucleotide (FGAR) and glutamine to yield formylglycinamidine ribonucleotide (FGAM) and glutamate. The FGAM synthase complex is composed of three subunits. PurQ produces an ammonia molecule by converting glutamine to glutamate. PurL transfers the ammonia molecule to FGAR to form FGAM in an ATP-dependent manner. PurS interacts with PurQ and PurL and is thought to assist in the transfer of the ammonia molecule from PurQ to PurL. In Lactobacillus acidophilus (strain ATCC 700396 / NCK56 / N2 / NCFM), this protein is Phosphoribosylformylglycinamidine synthase subunit PurQ.